Here is a 96-residue protein sequence, read N- to C-terminus: Protein TraA (96 aa).

This is Protein TraA (traA) from Escherichia coli.